The following is a 60-amino-acid chain: uncharacterized protein (60 aa).

Residues 27–49 (YYWLVSTARMVLGVTILILILIG) traverse the membrane as a helical segment.

It localises to the membrane. This is an uncharacterized protein from Archaeoglobus fulgidus (strain ATCC 49558 / DSM 4304 / JCM 9628 / NBRC 100126 / VC-16).